The following is a 563-amino-acid chain: MKRLNERSRMVTEGVARAPNRSMYYAIGYEEKDFVKPMVGVANGHSTITPCNSGLQKLADAAVSALEGAGAKAQMFGTPTVSDGIGMGTEGMKYSLVSREVIADSIETCVNGLWQDGVVVIGGCDKNMPGGMMALARTNVPGIYVYGGTIKPGHYKGKDLNIVSAFEAVGEFTSGRLSEEDLKGVEQHACPGSGSCGGMYTANTMSSAFEALGMSLPYSSTMANEDAEKVASTHDSAVVLVEAIKKNLRPRDIITKKSIENAVSVIMAVGGSTNAVLHFLAITSAAEIDWTIDDFERIRKRVPVIVDMKPSGTYLATDLHQAGGIPQVMKILLDDGLLHGDCMTITGKTVAEVLKDVPSVPRADQKVIRTLDNPLYKQGHLAILKGNISPEGCVTKITGLKNPSITGPARVFDSEDDAMAAIMAQKIKDGDIVVIRYEGPKGGPGMREMLAPTSALVGQGLGESVGLITDGRFSGGTWGMVVGHVAPEAYVGGTIALIHEGDSVTIDAHKLLIQLNVDDAEIAKRRAAWKQPKPRYTRGLLAKYAKLASTASKGAVTDLNLND.

Cys-51 is a [2Fe-2S] cluster binding site. A Mg(2+)-binding site is contributed by Asp-83. [2Fe-2S] cluster is bound at residue Cys-124. Mg(2+) is bound by residues Asp-125 and Lys-126. Lys-126 carries the post-translational modification N6-carboxylysine. Cys-196 is a [2Fe-2S] cluster binding site. A Mg(2+)-binding site is contributed by Glu-448. Ser-474 acts as the Proton acceptor in catalysis.

Belongs to the IlvD/Edd family. Homodimer. The cofactor is [2Fe-2S] cluster. Mg(2+) is required as a cofactor.

It catalyses the reaction (2R)-2,3-dihydroxy-3-methylbutanoate = 3-methyl-2-oxobutanoate + H2O. The enzyme catalyses (2R,3R)-2,3-dihydroxy-3-methylpentanoate = (S)-3-methyl-2-oxopentanoate + H2O. The protein operates within amino-acid biosynthesis; L-isoleucine biosynthesis; L-isoleucine from 2-oxobutanoate: step 3/4. It functions in the pathway amino-acid biosynthesis; L-valine biosynthesis; L-valine from pyruvate: step 3/4. Functionally, functions in the biosynthesis of branched-chain amino acids. Catalyzes the dehydration of (2R,3R)-2,3-dihydroxy-3-methylpentanoate (2,3-dihydroxy-3-methylvalerate) into 2-oxo-3-methylpentanoate (2-oxo-3-methylvalerate) and of (2R)-2,3-dihydroxy-3-methylbutanoate (2,3-dihydroxyisovalerate) into 2-oxo-3-methylbutanoate (2-oxoisovalerate), the penultimate precursor to L-isoleucine and L-valine, respectively. This Polynucleobacter necessarius subsp. necessarius (strain STIR1) protein is Dihydroxy-acid dehydratase.